A 453-amino-acid polypeptide reads, in one-letter code: Glutamyl-tRNA(Gln) amidotransferase subunit A (453 aa).

Active-site charge relay system residues include K53 and S128. Residue S152 is the Acyl-ester intermediate of the active site.

Belongs to the amidase family. GatA subfamily. Heterotrimer of A, B and C subunits.

The enzyme catalyses L-glutamyl-tRNA(Gln) + L-glutamine + ATP + H2O = L-glutaminyl-tRNA(Gln) + L-glutamate + ADP + phosphate + H(+). Functionally, allows the formation of correctly charged Gln-tRNA(Gln) through the transamidation of misacylated Glu-tRNA(Gln) in organisms which lack glutaminyl-tRNA synthetase. The reaction takes place in the presence of glutamine and ATP through an activated gamma-phospho-Glu-tRNA(Gln). The polypeptide is Glutamyl-tRNA(Gln) amidotransferase subunit A (Helicobacter pylori (strain P12)).